We begin with the raw amino-acid sequence, 86 residues long: uncharacterized protein (86 aa).

This is an uncharacterized protein from Schizosaccharomyces pombe (strain 972 / ATCC 24843) (Fission yeast).